Consider the following 394-residue polypeptide: GTPase Era, mitochondrial (394 aa).

In terms of domain architecture, Era-type G spans 32–280 (KCLQLAVIGA…RDHLMSISPQ (249 aa)). The tract at residues 40 to 47 (GAPNVGKS) is G1. A GTP-binding site is contributed by 40–47 (GAPNVGKS). Positions 66–70 (DTTTR) are G2. Residues 87–90 (DSPG) are G3. Residues 87–91 (DSPGA) and 160–163 (NKID) contribute to the GTP site. The G4 stretch occupies residues 160 to 163 (NKID). The G5 stretch occupies residues 259-261 (VSS).

It belongs to the TRAFAC class TrmE-Era-EngA-EngB-Septin-like GTPase superfamily. Era GTPase family.

It localises to the mitochondrion matrix. Its subcellular location is the mitochondrion inner membrane. Its function is as follows. Probable GTPase that plays a role in the mitochondrial ribosomal small subunit assembly. Specifically binds the 12S mitochondrial rRNA (12S mt-rRNA) to a 33 nucleotide section delineating the 3' terminal stem-loop region. May act as a chaperone that protects the 12S mt-rRNA on the 28S mitoribosomal subunit during ribosomal small subunit assembly. May play a role in positively regulating mitochondrial function. Plays a role in fertility. The sequence is that of GTPase Era, mitochondrial from Caenorhabditis elegans.